The following is a 239-amino-acid chain: MKLNISYPANGTQKLIEIDDDRRLRVFMEKRMGQEVPGDSVGPEFAGYVFKITGGNDKQGFPMFQGVLLPHRVRLLLRAGHPCYRPRRDGERKRKSVRGCIVGQDLAVLALAIIKQGEQDIPGLTDVTVPKRLGPKRASKIRRFFNLSKEDDVRQFVIRREVVPKKEGKKPYTKAPKIQRLVTPRTLQHKRHRFALKRRQAEKNREEAAEFAQLMAKRVAEAKQKREVVKARRASSLKK.

A phosphoserine mark is found at Ser235 and Ser236.

Belongs to the eukaryotic ribosomal protein eS6 family. Component of the small ribosomal subunit (SSU). Mature yeast ribosomes consist of a small (40S) and a large (60S) subunit. The 40S small subunit contains 1 molecule of ribosomal RNA (18S rRNA) and at least 33 different proteins. The large 60S subunit contains 3 rRNA molecules (25S, 5.8S and 5S rRNA) and at least 46 different proteins. Interacts with snoRNA U3. uS11 interacts with MPP10. Component of the ribosomal small subunit (SSU) processome composed of at least 40 protein subunits and snoRNA U3. In terms of processing, phosphorylated.

The protein resides in the cytoplasm. In terms of biological role, component of the ribosome, a large ribonucleoprotein complex responsible for the synthesis of proteins in the cell. The small ribosomal subunit (SSU) binds messenger RNAs (mRNAs) and translates the encoded message by selecting cognate aminoacyl-transfer RNA (tRNA) molecules. The large subunit (LSU) contains the ribosomal catalytic site termed the peptidyl transferase center (PTC), which catalyzes the formation of peptide bonds, thereby polymerizing the amino acids delivered by tRNAs into a polypeptide chain. The nascent polypeptides leave the ribosome through a tunnel in the LSU and interact with protein factors that function in enzymatic processing, targeting, and the membrane insertion of nascent chains at the exit of the ribosomal tunnel. eS6 is involved in nucleolar processing of pre-18S ribosomal RNA and ribosome assembly. The protein is Small ribosomal subunit protein eS6A (rps601) of Schizosaccharomyces pombe (strain 972 / ATCC 24843) (Fission yeast).